The primary structure comprises 612 residues: Peroxisomal carnitine O-octanoyltransferase (612 aa).

M1 bears the N-acetylmethionine mark. An N6-succinyllysine mark is found at K40 and K57. H327 (proton acceptor) is an active-site residue. Residues K406 and 410 to 417 (KEEALHPD) contribute to the CoA site. Position 406 is an N6-acetyllysine; alternate (K406). K406 is modified (N6-succinyllysine; alternate). The (R)-carnitine site is built by Y439, T441, and T452. The Microbody targeting signal motif lies at 610–612 (AHL).

The protein belongs to the carnitine/choline acetyltransferase family.

It is found in the peroxisome. It carries out the reaction octanoyl-CoA + (R)-carnitine = O-octanoyl-(R)-carnitine + CoA. The enzyme catalyses 4,8-dimethylnonanoyl-CoA + (R)-carnitine = O-4,8-dimethylnonanoyl-(R)-carnitine + CoA. The protein operates within lipid metabolism; fatty acid beta-oxidation. Functionally, beta-oxidation of fatty acids. The highest activity concerns the C6 to C10 chain length substrate. The chain is Peroxisomal carnitine O-octanoyltransferase (Crot) from Mus musculus (Mouse).